The following is a 278-amino-acid chain: Pantothenate synthetase (278 aa).

27 to 34 contacts ATP; sequence MGNLHEGH. Catalysis depends on His-34, which acts as the Proton donor. Gln-58 provides a ligand contact to (R)-pantoate. Gln-58 serves as a coordination point for beta-alanine. 147-150 contacts ATP; sequence GEKD. Gln-153 lines the (R)-pantoate pocket. 184 to 187 contacts ATP; the sequence is YSSR.

Belongs to the pantothenate synthetase family. In terms of assembly, homodimer.

The protein localises to the cytoplasm. It carries out the reaction (R)-pantoate + beta-alanine + ATP = (R)-pantothenate + AMP + diphosphate + H(+). It functions in the pathway cofactor biosynthesis; (R)-pantothenate biosynthesis; (R)-pantothenate from (R)-pantoate and beta-alanine: step 1/1. Catalyzes the condensation of pantoate with beta-alanine in an ATP-dependent reaction via a pantoyl-adenylate intermediate. This chain is Pantothenate synthetase, found in Acidithiobacillus ferrooxidans (strain ATCC 23270 / DSM 14882 / CIP 104768 / NCIMB 8455) (Ferrobacillus ferrooxidans (strain ATCC 23270)).